We begin with the raw amino-acid sequence, 169 residues long: ATP synthase subunit b, sodium ion specific (169 aa).

A helical transmembrane segment spans residues 5-27 (SFISLDWGVVFQIVNTIVMYLIL).

The protein belongs to the ATPase B chain family. F-type ATPases have 2 components, F(1) - the catalytic core - and F(0) - the membrane proton channel. F(1) has five subunits: alpha(3), beta(3), gamma(1), delta(1), epsilon(1). F(0) has three main subunits: a(1), b(2) and c(10-14). The alpha and beta chains form an alternating ring which encloses part of the gamma chain. F(1) is attached to F(0) by a central stalk formed by the gamma and epsilon chains, while a peripheral stalk is formed by the delta and b chains.

It localises to the cell membrane. Its function is as follows. F(1)F(0) ATP synthase produces ATP from ADP in the presence of a proton or sodium gradient. F-type ATPases consist of two structural domains, F(1) containing the extramembraneous catalytic core and F(0) containing the membrane proton channel, linked together by a central stalk and a peripheral stalk. During catalysis, ATP synthesis in the catalytic domain of F(1) is coupled via a rotary mechanism of the central stalk subunits to proton translocation. Component of the F(0) channel, it forms part of the peripheral stalk, linking F(1) to F(0). Functionally, in this organism this enzyme may function as an ATP-driven Na(+) ion pump to generate a Na(+) ion electrochemical gradient rather than as an ATP synthase. The protein is ATP synthase subunit b, sodium ion specific (atpF) of Clostridium paradoxum.